A 260-amino-acid polypeptide reads, in one-letter code: Proteasome subunit alpha (260 aa).

Residues 237–248 (ASTDAPAAAADS) are compositionally biased toward low complexity. A disordered region spans residues 237–260 (ASTDAPAAAADSADVEERPDSEAP). Basic and acidic residues predominate over residues 251–260 (VEERPDSEAP).

This sequence belongs to the peptidase T1A family. In terms of assembly, the 20S proteasome core is composed of 14 alpha and 14 beta subunits that assemble into four stacked heptameric rings, resulting in a barrel-shaped structure. The two inner rings, each composed of seven catalytic beta subunits, are sandwiched by two outer rings, each composed of seven alpha subunits. The catalytic chamber with the active sites is on the inside of the barrel. Has a gated structure, the ends of the cylinder being occluded by the N-termini of the alpha-subunits. Is capped by the proteasome-associated ATPase, ARC.

It is found in the cytoplasm. The protein operates within protein degradation; proteasomal Pup-dependent pathway. With respect to regulation, the formation of the proteasomal ATPase ARC-20S proteasome complex, likely via the docking of the C-termini of ARC into the intersubunit pockets in the alpha-rings, may trigger opening of the gate for substrate entry. Interconversion between the open-gate and close-gate conformations leads to a dynamic regulation of the 20S proteasome proteolysis activity. Component of the proteasome core, a large protease complex with broad specificity involved in protein degradation. This Salinispora tropica (strain ATCC BAA-916 / DSM 44818 / JCM 13857 / NBRC 105044 / CNB-440) protein is Proteasome subunit alpha.